The sequence spans 336 residues: Dihydroorotate dehydrogenase (quinone) (336 aa).

Residues 62-66 (AGLDK) and threonine 86 each bind FMN. Substrate is bound at residue lysine 66. 111–115 (NRMGF) provides a ligand contact to substrate. Positions 139 and 172 each coordinate FMN. Asparagine 172 serves as a coordination point for substrate. Catalysis depends on serine 175, which acts as the Nucleophile. Residue asparagine 177 coordinates substrate. Residues lysine 217 and threonine 245 each coordinate FMN. 246 to 247 (NT) is a substrate binding site. FMN contacts are provided by residues glycine 268, glycine 297, and 318–319 (YS).

It belongs to the dihydroorotate dehydrogenase family. Type 2 subfamily. Monomer. FMN is required as a cofactor.

It is found in the cell membrane. The enzyme catalyses (S)-dihydroorotate + a quinone = orotate + a quinol. It functions in the pathway pyrimidine metabolism; UMP biosynthesis via de novo pathway; orotate from (S)-dihydroorotate (quinone route): step 1/1. Functionally, catalyzes the conversion of dihydroorotate to orotate with quinone as electron acceptor. The polypeptide is Dihydroorotate dehydrogenase (quinone) (Pectobacterium atrosepticum (strain SCRI 1043 / ATCC BAA-672) (Erwinia carotovora subsp. atroseptica)).